The following is an 807-amino-acid chain: AP-5 complex subunit zeta-1 (807 aa).

In terms of assembly, probably part of the adaptor protein complex 5 (AP-5) a tetramer composed of AP5B1, AP5M1, AP5S1 and AP5Z1. Interacts with ZFYVE26 and SPG11.

Its subcellular location is the cytoplasm. The protein resides in the nucleus. Functionally, as part of AP-5, a probable fifth adaptor protein complex it may be involved in endosomal transport. According to PubMed:20613862 it is a putative helicase required for efficient homologous recombination DNA double-strand break repair. The protein is AP-5 complex subunit zeta-1 (AP5Z1) of Homo sapiens (Human).